Consider the following 437-residue polypeptide: uncharacterized protein (437 aa).

A phosphoserine mark is found at Ser-290 and Ser-293. Thr-296 bears the Phosphothreonine mark. A phosphoserine mark is found at Ser-418 and Ser-428.

This is an uncharacterized protein from Schizosaccharomyces pombe (strain 972 / ATCC 24843) (Fission yeast).